The sequence spans 101 residues: MDKSKRPFIKSKRSFRRRLPPIQSGDRIDYRNMSLISRFISEQGKILSRRVNRLTLKQQRLITSAIKQARILSLLPFLNNEKQFERTESTTRTANFRTKNK.

The protein belongs to the bacterial ribosomal protein bS18 family. As to quaternary structure, component of the chloroplast small ribosomal subunit (SSU). Mature 70S chloroplast ribosomes of higher plants consist of a small (30S) and a large (50S) subunit. The 30S small subunit contains 1 molecule of ribosomal RNA (16S rRNA) and 24 different proteins. The 50S large subunit contains 3 rRNA molecules (23S, 5S and 4.5S rRNA) and 33 different proteins.

The protein localises to the plastid. It is found in the chloroplast. Functionally, component of the chloroplast ribosome (chloro-ribosome), a dedicated translation machinery responsible for the synthesis of chloroplast genome-encoded proteins, including proteins of the transcription and translation machinery and components of the photosynthetic apparatus. The polypeptide is Small ribosomal subunit protein bS18c (RPS18) (Spinacia oleracea (Spinach)).